Consider the following 135-residue polypeptide: Phosphomevalonate dehydratase small subunit (135 aa).

Ser67 acts as the Proton acceptor in catalysis.

It belongs to the AcnX type II small subunit family. As to quaternary structure, heterodimer composed of a large subunit (PMDh-L) and a small subunit (PMDh-S).

The catalysed reaction is (R)-5-phosphomevalonate = (2E)-3-methyl-5-phosphooxypent-2-enoate + H2O. It participates in isoprenoid biosynthesis; isopentenyl diphosphate biosynthesis via mevalonate pathway. Component of a hydro-lyase that catalyzes the dehydration of mevalonate 5-phosphate (MVA5P) to form trans-anhydromevalonate 5-phosphate (tAHMP). Involved in the archaeal mevalonate (MVA) pathway, which provides fundamental precursors for isoprenoid biosynthesis, such as isopentenyl diphosphate (IPP) and dimethylallyl diphosphate (DMAPP). This is Phosphomevalonate dehydratase small subunit from Methanopyrus kandleri (strain AV19 / DSM 6324 / JCM 9639 / NBRC 100938).